We begin with the raw amino-acid sequence, 392 residues long: Alanine--glyoxylate aminotransferase (392 aa).

At Lys209 the chain carries N6-(pyridoxal phosphate)lysine. Lys225 carries the N6-acetyllysine; alternate modification. The residue at position 225 (Lys225) is an N6-succinyllysine; alternate. N6-acetyllysine occurs at positions 234 and 312. Arg360 contacts substrate. Positions 390 to 392 match the Microbody targeting signal motif; the sequence is KKL.

Belongs to the class-V pyridoxal-phosphate-dependent aminotransferase family. In terms of assembly, homodimer. Pyridoxal 5'-phosphate serves as cofactor.

It is found in the peroxisome. The catalysed reaction is L-serine + pyruvate = 3-hydroxypyruvate + L-alanine. The enzyme catalyses glyoxylate + L-alanine = glycine + pyruvate. Functionally, peroxisomal aminotransferase that catalyzes the transamination of glyoxylate to glycine and contributes to the glyoxylate detoxification. Also catalyzes the transamination between L-serine and pyruvate and contributes to gluconeogenesis from the L-serine metabolism. The sequence is that of Alanine--glyoxylate aminotransferase from Pongo abelii (Sumatran orangutan).